The primary structure comprises 192 residues: dTTP/UTP pyrophosphatase (192 aa).

Aspartate 71 serves as the catalytic Proton acceptor.

Belongs to the Maf family. YhdE subfamily. A divalent metal cation is required as a cofactor.

Its subcellular location is the cytoplasm. The catalysed reaction is dTTP + H2O = dTMP + diphosphate + H(+). It catalyses the reaction UTP + H2O = UMP + diphosphate + H(+). In terms of biological role, nucleoside triphosphate pyrophosphatase that hydrolyzes dTTP and UTP. May have a dual role in cell division arrest and in preventing the incorporation of modified nucleotides into cellular nucleic acids. The polypeptide is dTTP/UTP pyrophosphatase (Clostridium tetani (strain Massachusetts / E88)).